The following is a 180-amino-acid chain: MSKLEELDIVSNNILILKKFYTNDEWKNKLDSLIDRIIKAKKIFIFGVGRSGYIGRCFAMRLMHLGFKSYFVGETTTPSYEKDDLLILISGSGRTESVLTVAKKAKNINNNIIAIVCECGNVVEFADLTIPLEVKKSKYLPMGTTFEETALIFLDLVIAEIMKRLNLDESEIIKRHCNLL.

The 135-residue stretch at 33–167 (LIDRIIKAKK…IAEIMKRLNL (135 aa)) folds into the SIS domain. Residues Ser-51 and 90–95 (SGSGRT) each bind substrate. Catalysis depends on Glu-147, which acts as the Proton acceptor.

Belongs to the SIS family. PHI subfamily. In terms of assembly, homotetramer.

The catalysed reaction is D-arabino-hex-3-ulose 6-phosphate = beta-D-fructose 6-phosphate. Its pathway is carbohydrate biosynthesis; D-ribose 5-phosphate biosynthesis. Catalyzes the isomerization between 3-hexulose 6-phosphate and fructose 6-phosphate. The chain is 3-hexulose-6-phosphate isomerase (phi) from Methanocaldococcus jannaschii (strain ATCC 43067 / DSM 2661 / JAL-1 / JCM 10045 / NBRC 100440) (Methanococcus jannaschii).